The following is a 295-amino-acid chain: Pantothenate synthetase (295 aa).

The Proton donor role is filled by His-37. Gln-61 is a (R)-pantoate binding site. Gln-61 lines the beta-alanine pocket. Position 154–157 (154–157 (GRKD)) interacts with ATP. Gln-160 is a binding site for (R)-pantoate. ATP is bound by residues Val-183 and 191-194 (QSSR).

Belongs to the pantothenate synthetase family. Homodimer.

It localises to the cytoplasm. The catalysed reaction is (R)-pantoate + beta-alanine + ATP = (R)-pantothenate + AMP + diphosphate + H(+). It participates in cofactor biosynthesis; (R)-pantothenate biosynthesis; (R)-pantothenate from (R)-pantoate and beta-alanine: step 1/1. Its function is as follows. Catalyzes the condensation of pantoate with beta-alanine in an ATP-dependent reaction via a pantoyl-adenylate intermediate. In Salinibacter ruber (strain DSM 13855 / M31), this protein is Pantothenate synthetase.